An 889-amino-acid chain; its full sequence is Cytoplasmic aconitate hydratase (889 aa).

Substrate contacts are provided by residues Gln86 and 205–207 (DSH). [4Fe-4S] cluster contacts are provided by Cys437, Cys503, and Cys506. Substrate-binding positions include Arg536, Arg541, Arg699, and 779–780 (SR).

Belongs to the aconitase/IPM isomerase family. Interacts (when associated with the 4Fe-4S) with FBXL5. Interacts with frataxin(81-210). [4Fe-4S] cluster serves as cofactor.

It localises to the cytoplasm. It is found in the cytosol. It carries out the reaction citrate = D-threo-isocitrate. In terms of biological role, bifunctional iron sensor that switches between 2 activities depending on iron availability. Iron deprivation, promotes its mRNA binding activity through which it regulates the expression of genes involved in iron uptake, sequestration and utilization. Binds to iron-responsive elements (IRES) in the untranslated region of target mRNAs preventing for instance the translation of ferritin and aminolevulinic acid synthase and stabilizing the transferrin receptor mRNA. Functionally, conversely, when cellular iron levels are high, binds a 4Fe-4S cluster which precludes RNA binding activity and promotes the aconitase activity, the isomerization of citrate to isocitrate via cis-aconitate. The chain is Cytoplasmic aconitate hydratase (ACO1) from Bos taurus (Bovine).